Reading from the N-terminus, the 240-residue chain is Aspartate/glutamate leucyltransferase (240 aa).

Belongs to the R-transferase family. Bpt subfamily.

It is found in the cytoplasm. The catalysed reaction is N-terminal L-glutamyl-[protein] + L-leucyl-tRNA(Leu) = N-terminal L-leucyl-L-glutamyl-[protein] + tRNA(Leu) + H(+). It catalyses the reaction N-terminal L-aspartyl-[protein] + L-leucyl-tRNA(Leu) = N-terminal L-leucyl-L-aspartyl-[protein] + tRNA(Leu) + H(+). Functions in the N-end rule pathway of protein degradation where it conjugates Leu from its aminoacyl-tRNA to the N-termini of proteins containing an N-terminal aspartate or glutamate. The protein is Aspartate/glutamate leucyltransferase of Thiobacillus denitrificans (strain ATCC 25259 / T1).